Consider the following 204-residue polypeptide: Large ribosomal subunit protein uL4 (204 aa).

Residues alanine 53 to alanine 73 are disordered.

The protein belongs to the universal ribosomal protein uL4 family. In terms of assembly, part of the 50S ribosomal subunit.

Functionally, one of the primary rRNA binding proteins, this protein initially binds near the 5'-end of the 23S rRNA. It is important during the early stages of 50S assembly. It makes multiple contacts with different domains of the 23S rRNA in the assembled 50S subunit and ribosome. Its function is as follows. Forms part of the polypeptide exit tunnel. This is Large ribosomal subunit protein uL4 from Campylobacter concisus (strain 13826).